We begin with the raw amino-acid sequence, 359 residues long: MKPSIYSLTRDELIAWAVERGQKQFRATQIWDWLYKKRVQSFEEMTNISKDFVSILNDSFCVNPLKQRVVQESADGTVKYLFELPDGMLIETVLMRQHYGHSVCVTTQVGCNIGCTFCASGLIKKQRDLNSGEITAQIMLVQKYFDDRKQGERVSHVVVMGIGEPFDNYKNVMCFLRVINDDNGLAIGARHITVSTSGLAHKIRDFANEGVQVNLAVSLHAPNNDLRSSIMRVNRSFPLEKLFSAIEYYIEKTNRRVTFEYIMLNEVNDSIKQAQELADLTKTIRKLSYVNLIPYNPVSEHDQYSRSPKERVLAFYDVLKKNGVNCVVRQEHGTDIDAACGQLRSKTMKKDREKVTATK.

E91 acts as the Proton acceptor in catalysis. Positions 97–329 constitute a Radical SAM core domain; it reads QHYGHSVCVT…KKNGVNCVVR (233 aa). The cysteines at positions 104 and 340 are disulfide-linked. Positions 111, 115, and 118 each coordinate [4Fe-4S] cluster. S-adenosyl-L-methionine is bound by residues 163 to 164, S195, 218 to 220, and N296; these read GE and SLH. The active-site S-methylcysteine intermediate is the C340.

It belongs to the radical SAM superfamily. RlmN family. Requires [4Fe-4S] cluster as cofactor.

The protein localises to the cytoplasm. The enzyme catalyses adenosine(2503) in 23S rRNA + 2 reduced [2Fe-2S]-[ferredoxin] + 2 S-adenosyl-L-methionine = 2-methyladenosine(2503) in 23S rRNA + 5'-deoxyadenosine + L-methionine + 2 oxidized [2Fe-2S]-[ferredoxin] + S-adenosyl-L-homocysteine. It carries out the reaction adenosine(37) in tRNA + 2 reduced [2Fe-2S]-[ferredoxin] + 2 S-adenosyl-L-methionine = 2-methyladenosine(37) in tRNA + 5'-deoxyadenosine + L-methionine + 2 oxidized [2Fe-2S]-[ferredoxin] + S-adenosyl-L-homocysteine. Specifically methylates position 2 of adenine 2503 in 23S rRNA and position 2 of adenine 37 in tRNAs. This chain is Probable dual-specificity RNA methyltransferase RlmN, found in Streptococcus pyogenes serotype M3 (strain ATCC BAA-595 / MGAS315).